A 177-amino-acid chain; its full sequence is Olfactory protein (177 aa).

A signal peptide spans 1–17; it reads MIRIIAIVVLFFLQCQA. The cysteines at positions 81 and 174 are disulfide-linked.

Belongs to the calycin superfamily. Lipocalin family. In terms of tissue distribution, synthesized in Bowman glands, which secrete the mucus that bathes the cilia of the olfactory neuroepithelium.

The protein resides in the secreted. This Lithobates pipiens (Northern leopard frog) protein is Olfactory protein.